The sequence spans 245 residues: Triosephosphate isomerase (245 aa).

4–6 provides a ligand contact to substrate; sequence NWK. His-91 functions as the Electrophile in the catalytic mechanism. Residue Glu-161 is the Proton acceptor of the active site. Residues Gly-167, Ser-207, and 228 to 229 each bind substrate; that span reads GG.

This sequence belongs to the triosephosphate isomerase family. In terms of assembly, homodimer.

The protein localises to the cytoplasm. The catalysed reaction is D-glyceraldehyde 3-phosphate = dihydroxyacetone phosphate. It functions in the pathway carbohydrate biosynthesis; gluconeogenesis. Its pathway is carbohydrate degradation; glycolysis; D-glyceraldehyde 3-phosphate from glycerone phosphate: step 1/1. In terms of biological role, involved in the gluconeogenesis. Catalyzes stereospecifically the conversion of dihydroxyacetone phosphate (DHAP) to D-glyceraldehyde-3-phosphate (G3P). The chain is Triosephosphate isomerase from Chlorobaculum tepidum (strain ATCC 49652 / DSM 12025 / NBRC 103806 / TLS) (Chlorobium tepidum).